The chain runs to 312 residues: Bark storage protein B (312 aa).

The N-terminal stretch at 1-24 (MPQQSMQASLRDPIAEIERSNCKI) is a signal peptide. Asn70 carries an N-linked (GlcNAc...) asparagine glycan.

This sequence to wound-inducible poplar endochitinases. As to quaternary structure, monomer. Bark tissue.

May play a role in nitrogen storage. The protein is Bark storage protein B (BSP) of Populus deltoides (Eastern poplar).